The sequence spans 156 residues: Small ribosomal subunit protein uS7 (156 aa).

The protein belongs to the universal ribosomal protein uS7 family. Part of the 30S ribosomal subunit. Contacts proteins S9 and S11.

Functionally, one of the primary rRNA binding proteins, it binds directly to 16S rRNA where it nucleates assembly of the head domain of the 30S subunit. Is located at the subunit interface close to the decoding center, probably blocks exit of the E-site tRNA. The protein is Small ribosomal subunit protein uS7 of Prochlorococcus marinus subsp. pastoris (strain CCMP1986 / NIES-2087 / MED4).